The following is a 714-amino-acid chain: Fatty acid oxidation complex subunit alpha (714 aa).

The tract at residues 1–190 is enoyl-CoA hydratase; it reads MEMASAFTLN…KLGLVDDVVP (190 aa). Residues 306–714 form a 3-hydroxyacyl-CoA dehydrogenase region; that stretch reads APLNSVGILG…FWKTTATDLQ (409 aa).

The protein in the N-terminal section; belongs to the enoyl-CoA hydratase/isomerase family. In the central section; belongs to the 3-hydroxyacyl-CoA dehydrogenase family. As to quaternary structure, heterotetramer of two alpha chains (FadJ) and two beta chains (FadI).

It is found in the cytoplasm. The catalysed reaction is a (3S)-3-hydroxyacyl-CoA = a (2E)-enoyl-CoA + H2O. The enzyme catalyses a 4-saturated-(3S)-3-hydroxyacyl-CoA = a (3E)-enoyl-CoA + H2O. It catalyses the reaction a (3S)-3-hydroxyacyl-CoA + NAD(+) = a 3-oxoacyl-CoA + NADH + H(+). It carries out the reaction (3S)-3-hydroxybutanoyl-CoA = (3R)-3-hydroxybutanoyl-CoA. Its pathway is lipid metabolism; fatty acid beta-oxidation. Functionally, catalyzes the formation of a hydroxyacyl-CoA by addition of water on enoyl-CoA. Also exhibits 3-hydroxyacyl-CoA epimerase and 3-hydroxyacyl-CoA dehydrogenase activities. This is Fatty acid oxidation complex subunit alpha from Escherichia coli O45:K1 (strain S88 / ExPEC).